The primary structure comprises 204 residues: dITP/XTP pyrophosphatase (204 aa).

8-13 (SNNAKK) contacts substrate. Mg(2+)-binding residues include Glu-43 and Asp-72. Catalysis depends on Asp-72, which acts as the Proton acceptor. Residues Ser-73, 155 to 158 (FGYD), Lys-180, and 185 to 186 (HR) each bind substrate.

This sequence belongs to the HAM1 NTPase family. In terms of assembly, homodimer. Mg(2+) is required as a cofactor.

The enzyme catalyses XTP + H2O = XMP + diphosphate + H(+). It catalyses the reaction dITP + H2O = dIMP + diphosphate + H(+). It carries out the reaction ITP + H2O = IMP + diphosphate + H(+). Pyrophosphatase that catalyzes the hydrolysis of nucleoside triphosphates to their monophosphate derivatives, with a high preference for the non-canonical purine nucleotides XTP (xanthosine triphosphate), dITP (deoxyinosine triphosphate) and ITP. Seems to function as a house-cleaning enzyme that removes non-canonical purine nucleotides from the nucleotide pool, thus preventing their incorporation into DNA/RNA and avoiding chromosomal lesions. The protein is dITP/XTP pyrophosphatase of Cutibacterium acnes (strain DSM 16379 / KPA171202) (Propionibacterium acnes).